We begin with the raw amino-acid sequence, 201 residues long: UPF0301 protein Bpet0561 (201 aa).

It belongs to the UPF0301 (AlgH) family.

The protein is UPF0301 protein Bpet0561 of Bordetella petrii (strain ATCC BAA-461 / DSM 12804 / CCUG 43448).